Consider the following 473-residue polypeptide: Photosystem II CP43 reaction center protein (473 aa).

A propeptide spanning residues 1 to 14 is cleaved from the precursor; sequence MKTLYSLRRFYPVE. T15 is modified (N-acetylthreonine). T15 bears the Phosphothreonine mark. 5 helical membrane-spanning segments follow: residues 69–93, 134–155, 178–200, 255–275, and 291–312; these read LFEVAHFVPEKPMYEQGLILLPHLA, LLGPETLEESFPFFGYVWKDRN, KALYFGGVYDTWAPGGGDVRRIT, KPFAWARRALVWSGEAYLSYS, and WFNNTAYPSEFYGPTGPEASQA. Residue E367 participates in [CaMn4O5] cluster binding. Residues 447-471 traverse the membrane as a helical segment; that stretch reads RARAAAAGFEKGIDRDFEPVLSMTP.

The protein belongs to the PsbB/PsbC family. PsbC subfamily. As to quaternary structure, PSII is composed of 1 copy each of membrane proteins PsbA, PsbB, PsbC, PsbD, PsbE, PsbF, PsbH, PsbI, PsbJ, PsbK, PsbL, PsbM, PsbT, PsbX, PsbY, PsbZ, Psb30/Ycf12, at least 3 peripheral proteins of the oxygen-evolving complex and a large number of cofactors. It forms dimeric complexes. Requires Binds multiple chlorophylls and provides some of the ligands for the Ca-4Mn-5O cluster of the oxygen-evolving complex. It may also provide a ligand for a Cl- that is required for oxygen evolution. PSII binds additional chlorophylls, carotenoids and specific lipids. as cofactor.

Its subcellular location is the plastid. It localises to the chloroplast thylakoid membrane. In terms of biological role, one of the components of the core complex of photosystem II (PSII). It binds chlorophyll and helps catalyze the primary light-induced photochemical processes of PSII. PSII is a light-driven water:plastoquinone oxidoreductase, using light energy to abstract electrons from H(2)O, generating O(2) and a proton gradient subsequently used for ATP formation. The sequence is that of Photosystem II CP43 reaction center protein from Illicium oligandrum (Star anise).